Here is a 130-residue protein sequence, read N- to C-terminus: Large ribosomal subunit protein bL17 (130 aa).

Belongs to the bacterial ribosomal protein bL17 family. As to quaternary structure, part of the 50S ribosomal subunit. Contacts protein L32.

The polypeptide is Large ribosomal subunit protein bL17 (Shewanella pealeana (strain ATCC 700345 / ANG-SQ1)).